The following is a 463-amino-acid chain: Competence protein ComFA (463 aa).

Zn(2+) contacts are provided by Cys60, Cys63, Cys84, and Cys87. The 153-residue stretch at 133–285 folds into the Helicase ATP-binding domain; that stretch reads IEAISKKEEL…LNGQLHSVRI (153 aa). 146–153 serves as a coordination point for ATP; that stretch reads AVCGAGKT. The DEAD box signature appears at 233–236; the sequence is DEVD. A Helicase C-terminal domain is found at 317–463; that stretch reads AVKRWIEFHV…ELAAKVECTD (147 aa).

This sequence belongs to the DEAD box helicase family. As to quaternary structure, monomer and dimer in solution. Interacts with DprA and ComFC; ComFA-ComFC form rings about 150 Angstroms in diameter with apparent 6-fold symmetry. Zn(2+) serves as cofactor.

The protein resides in the cytoplasm. Involved in transformation (genetic competence for DNA uptake). Required for DNA uptake but not for DNA binding to cells. DNA uptake is energy dependent, this protein may provide the driving force for DNA uptake. Does not have helicase activity, translocates on single-stranded (ss)DNA in a 5'-3' direction in an ATP-dependent manner, but does not unwind double-stranded (ds)DNA. ATP hydrolysis causes the release of ssDNA from ComFA. A ssDNA-stimulated ATPase; dsDNA does not stimulate ATPase. ATP hydrolysis causes the release of ssDNA from ComFA. Binds ssDNA but only very poorly to dsDNA in the absence of ATP. Binding to ssDNA does not require free DNA ends. This Bacillus subtilis (strain 168) protein is Competence protein ComFA.